The chain runs to 231 residues: Membrane protein YknW (231 aa).

The next 5 helical transmembrane spans lie at 38-58 (VWGP…LQSL), 93-113 (GAII…WLCV), 128-148 (LSLF…IVAF), 171-191 (LASV…LLAI), and 205-225 (WISA…SGLI).

As to quaternary structure, interacts with a complex composed of YknX, YknY and YknZ.

It localises to the cell membrane. In terms of biological role, part of an unusual four-component transporter, which is required for protection against the killing factor SdpC (sporulation-delaying protein). Has a role in the assembly of the YknXYZ complex. In Bacillus subtilis (strain 168), this protein is Membrane protein YknW (yknW).